The sequence spans 264 residues: 1-(5-phosphoribosyl)-5-[(5-phosphoribosylamino)methylideneamino] imidazole-4-carboxamide isomerase (264 aa).

It belongs to the HisA/HisF family.

The protein resides in the cytoplasm. It catalyses the reaction 1-(5-phospho-beta-D-ribosyl)-5-[(5-phospho-beta-D-ribosylamino)methylideneamino]imidazole-4-carboxamide = 5-[(5-phospho-1-deoxy-D-ribulos-1-ylimino)methylamino]-1-(5-phospho-beta-D-ribosyl)imidazole-4-carboxamide. The protein operates within amino-acid biosynthesis; L-histidine biosynthesis; L-histidine from 5-phospho-alpha-D-ribose 1-diphosphate: step 4/9. The protein is 1-(5-phosphoribosyl)-5-[(5-phosphoribosylamino)methylideneamino] imidazole-4-carboxamide isomerase (HIS6) of Yarrowia lipolytica (strain CLIB 122 / E 150) (Yeast).